Consider the following 76-residue polypeptide: Protein CYSTEINE-RICH TRANSMEMBRANE MODULE 11 (76 aa).

The interval 19 to 45 is disordered; the sequence is GPPPPVGVPPQYYPPPPPPPPPPPPPR. The helical transmembrane segment at 47-63 threads the bilayer; that stretch reads VGFLEGLLAALCCCCLV.

The protein belongs to the CYSTM1 family. In terms of assembly, heterodimers. Interacts with CYSTM6, CYSTM7 and WIH1/CYSTM13. As to expression, mostly expressed in stems, siliques, leaves and flowers and, to a lower extent, in roots.

It localises to the cell membrane. It is found in the cytoplasm. In terms of biological role, involved in resistance to abiotic stress. In Arabidopsis thaliana (Mouse-ear cress), this protein is Protein CYSTEINE-RICH TRANSMEMBRANE MODULE 11.